The sequence spans 141 residues: Hemoglobin subunit alpha (141 aa).

The region spanning 1–141 (VLSPADKTNV…VSTVLTSKYR (141 aa)) is the Globin domain. Position 3 is a phosphoserine (serine 3). N6-succinyllysine is present on lysine 7. Residue threonine 8 is modified to Phosphothreonine. N6-succinyllysine is present on lysine 11. An N6-acetyllysine; alternate modification is found at lysine 16. Lysine 16 is subject to N6-succinyllysine; alternate. Tyrosine 24 bears the Phosphotyrosine mark. Serine 35 is subject to Phosphoserine. Lysine 40 carries the N6-succinyllysine modification. The residue at position 49 (serine 49) is a Phosphoserine. Histidine 58 provides a ligand contact to O2. Histidine 87 is a binding site for heme b. Serine 102 carries the post-translational modification Phosphoserine. Position 108 is a phosphothreonine (threonine 108). Residue serine 124 is modified to Phosphoserine. Threonine 134 and threonine 137 each carry phosphothreonine. Serine 138 is modified (phosphoserine).

Belongs to the globin family. Heterotetramer of two alpha chains and two beta chains. In terms of tissue distribution, red blood cells.

Its function is as follows. Involved in oxygen transport from the lung to the various peripheral tissues. In terms of biological role, hemopressin acts as an antagonist peptide of the cannabinoid receptor CNR1. Hemopressin-binding efficiently blocks cannabinoid receptor CNR1 and subsequent signaling. In Martes foina (Beech marten), this protein is Hemoglobin subunit alpha (HBA).